A 262-amino-acid chain; its full sequence is Indole-3-glycerol phosphate synthase (262 aa).

Belongs to the TrpC family.

The catalysed reaction is 1-(2-carboxyphenylamino)-1-deoxy-D-ribulose 5-phosphate + H(+) = (1S,2R)-1-C-(indol-3-yl)glycerol 3-phosphate + CO2 + H2O. The protein operates within amino-acid biosynthesis; L-tryptophan biosynthesis; L-tryptophan from chorismate: step 4/5. The chain is Indole-3-glycerol phosphate synthase from Aromatoleum aromaticum (strain DSM 19018 / LMG 30748 / EbN1) (Azoarcus sp. (strain EbN1)).